The following is a 508-amino-acid chain: Chromosomal replication initiator protein DnaA (508 aa).

Residues Met1–Pro90 are domain I, interacts with DnaA modulators. A domain II region spans residues Asn91 to Ser171. Residues Glu130 to Thr160 form a disordered region. The interval Tyr172 to Ser388 is domain III, AAA+ region. Residues Gly216, Gly218, Lys219, and Thr220 each contribute to the ATP site. Residues His389–Thr508 form a domain IV, binds dsDNA region.

This sequence belongs to the DnaA family. As to quaternary structure, oligomerizes as a right-handed, spiral filament on DNA at oriC.

Its subcellular location is the cytoplasm. Functionally, plays an essential role in the initiation and regulation of chromosomal replication. ATP-DnaA binds to the origin of replication (oriC) to initiate formation of the DNA replication initiation complex once per cell cycle. Binds the DnaA box (a 9 base pair repeat at the origin) and separates the double-stranded (ds)DNA. Forms a right-handed helical filament on oriC DNA; dsDNA binds to the exterior of the filament while single-stranded (ss)DNA is stabiized in the filament's interior. The ATP-DnaA-oriC complex binds and stabilizes one strand of the AT-rich DNA unwinding element (DUE), permitting loading of DNA polymerase. After initiation quickly degrades to an ADP-DnaA complex that is not apt for DNA replication. Binds acidic phospholipids. This is Chromosomal replication initiator protein DnaA from Pseudomonas entomophila (strain L48).